Reading from the N-terminus, the 376-residue chain is tRNA-specific 2-thiouridylase MnmA (376 aa).

ATP contacts are provided by residues 16–23 and Leu-42; that span reads AMSGGVDS. Cys-111 serves as the catalytic Nucleophile. A disulfide bond links Cys-111 and Cys-210. Residue Gly-135 coordinates ATP. Residues 158–160 are interaction with tRNA; it reads KDQ. Cys-210 (cysteine persulfide intermediate) is an active-site residue.

The protein belongs to the MnmA/TRMU family.

Its subcellular location is the cytoplasm. The catalysed reaction is S-sulfanyl-L-cysteinyl-[protein] + uridine(34) in tRNA + AH2 + ATP = 2-thiouridine(34) in tRNA + L-cysteinyl-[protein] + A + AMP + diphosphate + H(+). In terms of biological role, catalyzes the 2-thiolation of uridine at the wobble position (U34) of tRNA, leading to the formation of s(2)U34. In Streptomyces coelicolor (strain ATCC BAA-471 / A3(2) / M145), this protein is tRNA-specific 2-thiouridylase MnmA.